A 522-amino-acid chain; its full sequence is Maturase K (522 aa).

This sequence belongs to the intron maturase 2 family. MatK subfamily.

Its subcellular location is the plastid. The protein localises to the chloroplast. Functionally, usually encoded in the trnK tRNA gene intron. Probably assists in splicing its own and other chloroplast group II introns. This is Maturase K from Sapindus saponaria (Soapberry).